We begin with the raw amino-acid sequence, 468 residues long: Immunoglobulin superfamily member 21 (468 aa).

Positions 1–24 (MQAAPSLRRASCLLLAAILDLARG) are cleaved as a signal peptide. Residues 25–132 (YLTVNIEPLP…RATREKVVLA (108 aa)) form the Ig-like 1 domain. The cysteines at positions 46 and 116 are disulfide-linked. 3 N-linked (GlcNAc...) asparagine glycosylation sites follow: N82, N165, and N407. In terms of domain architecture, Ig-like 2 spans 344 to 429 (PKIMMTPSRA…GSTDTHTRLI (86 aa)).

As to quaternary structure, interacts (Ig-like 1 domain) with NRXN2 (via Laminin G-like 1 domain) in a trans-interaction manner. Expressed in brain (at protein levels). Highly expressed in the pyramidal cell layer of the dorsal and ventral hippocampal CA1 and CA3 regions, layers 5 and 6 of the cortex, the thalamus and the pons and weakly expressed in the cerebellum. Expressed in neurons but not in glia.

Its subcellular location is the postsynaptic cell membrane. In terms of biological role, involved in synaptic inhibition in the brain. Selectively regulates inhibitory presynaptic differentiation through interacting with presynaptic NRXN2. The sequence is that of Immunoglobulin superfamily member 21 (Igsf21) from Mus musculus (Mouse).